We begin with the raw amino-acid sequence, 407 residues long: Digeranylgeranylglycerophospholipid reductase (407 aa).

Residues alanine 15, glutamate 34, cysteine 45, alanine 46, glycine 48, arginine 99, alanine 123, aspartate 281, glycine 293, and isoleucine 294 each contribute to the FAD site.

It belongs to the geranylgeranyl reductase family. DGGGPL reductase subfamily. FAD serves as cofactor.

It catalyses the reaction a 2,3-bis-O-phytanyl-sn-glycerol 1-phospholipid + 8 oxidized 2[4Fe-4S]-[ferredoxin] = a 2,3-bis-O-(geranylgeranyl)-sn-glycerol 1-phospholipid + 8 reduced 2[4Fe-4S]-[ferredoxin] + 16 H(+). It carries out the reaction 2,3-bis-O-(phytanyl)-sn-glycerol 1-phosphate + 8 oxidized 2[4Fe-4S]-[ferredoxin] = 2,3-bis-O-(geranylgeranyl)-sn-glycerol 1-phosphate + 8 reduced 2[4Fe-4S]-[ferredoxin] + 16 H(+). The enzyme catalyses a 2,3-bis-O-phytanyl-sn-glycerol 1-phospholipid + 8 A = a 2,3-bis-O-(geranylgeranyl)-sn-glycerol 1-phospholipid + 8 AH2. The catalysed reaction is CDP-2,3-bis-O-(geranylgeranyl)-sn-glycerol + 8 AH2 = CDP-2,3-bis-O-(phytanyl)-sn-glycerol + 8 A. It catalyses the reaction archaetidylserine + 8 AH2 = 2,3-bis-O-phytanyl-sn-glycero-3-phospho-L-serine + 8 A. Its pathway is membrane lipid metabolism; glycerophospholipid metabolism. Its function is as follows. Is involved in the reduction of 2,3-digeranylgeranylglycerophospholipids (unsaturated archaeols) into 2,3-diphytanylglycerophospholipids (saturated archaeols) in the biosynthesis of archaeal membrane lipids. Catalyzes the formation of archaetidic acid (2,3-di-O-phytanyl-sn-glyceryl phosphate) from 2,3-di-O-geranylgeranylglyceryl phosphate (DGGGP) via the hydrogenation of each double bond of the isoprenoid chains. Is also probably able to reduce double bonds of geranyl groups in CDP-2,3-bis-O-(geranylgeranyl)-sn-glycerol and archaetidylserine, thus acting at various stages in the biosynthesis of archaeal membrane lipids. The sequence is that of Digeranylgeranylglycerophospholipid reductase from Methanosarcina mazei (strain ATCC BAA-159 / DSM 3647 / Goe1 / Go1 / JCM 11833 / OCM 88) (Methanosarcina frisia).